The primary structure comprises 1439 residues: Histone-lysine N-methyltransferase NSD3 (1439 aa).

The tract at residues 121–151 is disordered; sequence PHEILEKPSPPQPPPPPSVPQTVIPKKTGSP. Over residues 128-139 the composition is skewed to pro residues; sequence PSPPQPPPPPSV. Serine 150 is modified (phosphoserine). A KIKL motif is present at residues 154 to 157; the sequence is KLKI. The tract at residues 181-247 is disordered; the sequence is QASEHTKSKH…PREEPVLKEA (67 aa). The segment covering 187 to 201 has biased composition (basic residues); it reads KSKHESRKEKRKKSN. Residues 202–244 show a composition bias toward basic and acidic residues; it reads RHESSRSEERRSHKIPKLEPEGQNRPNERVDTAPEKPREEPVL. Glycyl lysine isopeptide (Lys-Gly) (interchain with G-Cter in SUMO2) cross-links involve residues lysine 218 and lysine 245. Residues 270-333 enclose the PWWP 1 domain; that stretch reads VGDLVWSKVG…EKRVREYKGH (64 aa). Disordered regions lie at residues 344–367 and 401–466; these read AKQA…ERAQ and EASS…PPPV. 2 stretches are compositionally biased toward polar residues: residues 401–413 and 425–445; these read EASS…VTSK and VLNS…QSST. Residue lysine 413 forms a Glycyl lysine isopeptide (Lys-Gly) (interchain with G-Cter in SUMO2) linkage. A Phosphoserine modification is found at serine 457. Glycyl lysine isopeptide (Lys-Gly) (interchain with G-Cter in SUMO2) cross-links involve residues lysine 502 and lysine 532. The tract at residues 540-695 is disordered; it reads QDRLIISSPS…VDSSLSRRGV (156 aa). The span at 546–568 shows a compositional bias: polar residues; it reads SSPSQRSEKPAQSASSPEATSGS. The segment covering 583-595 has biased composition (basic and acidic residues); that stretch reads TRSESEKSAEVVP. Residues serine 585, serine 587, and serine 590 each carry the phosphoserine modification. Residue lysine 628 forms a Glycyl lysine isopeptide (Lys-Gly) (interchain with G-Cter in SUMO2) linkage. Over residues 637–648 the composition is skewed to polar residues; that stretch reads STDVETASCTYR. Serine 655 is modified (phosphoserine). Residues 670–691 show a composition bias toward low complexity; it reads DSPSATADADASDAQSVDSSLS. 3 PHD-type zinc fingers span residues 701 to 748, 749 to 805, and 862 to 955; these read DTVC…CETG, QHPC…CSME, and VGFC…CKAG. Lysine 790 carries the post-translational modification N6-acetyllysine. The region spanning 960–1025 is the PWWP 2 domain; sequence YKQIVWVKLG…QGRVFPYVEG (66 aa). Residues 1036–1065 are a coiled coil; the sequence is INKTFKKALEEAAKRFQELKAQRESKEALE. Residues 1096–1146 enclose the AWS domain; the sequence is SEIPRCNCKPGDENPCGLESQCLNRMSQYECHPQVCPAGDRCQNQCFTKRL. The 118-residue stretch at 1148-1265 folds into the SET domain; the sequence is PDAEVIKTER…AGMELTFNYN (118 aa). Lysine 1154 participates in a covalent cross-link: Glycyl lysine isopeptide (Lys-Gly) (interchain with G-Cter in SUMO2). In terms of domain architecture, Post-SET spans 1272–1288; that stretch reads GRTVCHCGADNCSGFLG. Residues 1323 to 1370 form a PHD-type 4; atypical zinc finger; the sequence is EDYCFQCGDGGELVMCDKKDCPKAYHLLCLNLTQPPHGKWECPWHRCD.

It belongs to the class V-like SAM-binding methyltransferase superfamily. Histone-lysine methyltransferase family. SET2 subfamily. In terms of assembly, interacts with BRD4. Interacts (via KIKL motif) with BRD3 (via NET domain).

Its subcellular location is the nucleus. It localises to the chromosome. The enzyme catalyses L-lysyl(4)-[histone H3] + 2 S-adenosyl-L-methionine = N(6),N(6)-dimethyl-L-lysyl(4)-[histone H3] + 2 S-adenosyl-L-homocysteine + 2 H(+). It catalyses the reaction L-lysyl(27)-[histone H3] + 2 S-adenosyl-L-methionine = N(6),N(6)-dimethyl-L-lysyl(27)-[histone H3] + 2 S-adenosyl-L-homocysteine + 2 H(+). Functionally, histone methyltransferase. Preferentially dimethylates 'Lys-4' and 'Lys-27' of histone H3 forming H3K4me2 and H3K27me2. H3 'Lys-4' methylation represents a specific tag for epigenetic transcriptional activation, while 'Lys-27' is a mark for transcriptional repression. The protein is Histone-lysine N-methyltransferase NSD3 (Nsd3) of Mus musculus (Mouse).